A 265-amino-acid polypeptide reads, in one-letter code: Imidazole glycerol phosphate synthase subunit HisF (265 aa).

Active-site residues include D17 and D136.

The protein belongs to the HisA/HisF family. In terms of assembly, heterodimer of HisH and HisF.

Its subcellular location is the cytoplasm. It catalyses the reaction 5-[(5-phospho-1-deoxy-D-ribulos-1-ylimino)methylamino]-1-(5-phospho-beta-D-ribosyl)imidazole-4-carboxamide + L-glutamine = D-erythro-1-(imidazol-4-yl)glycerol 3-phosphate + 5-amino-1-(5-phospho-beta-D-ribosyl)imidazole-4-carboxamide + L-glutamate + H(+). It participates in amino-acid biosynthesis; L-histidine biosynthesis; L-histidine from 5-phospho-alpha-D-ribose 1-diphosphate: step 5/9. Its function is as follows. IGPS catalyzes the conversion of PRFAR and glutamine to IGP, AICAR and glutamate. The HisF subunit catalyzes the cyclization activity that produces IGP and AICAR from PRFAR using the ammonia provided by the HisH subunit. The polypeptide is Imidazole glycerol phosphate synthase subunit HisF (Mycolicibacterium paratuberculosis (strain ATCC BAA-968 / K-10) (Mycobacterium paratuberculosis)).